Consider the following 387-residue polypeptide: Probable WRKY transcription factor 36 (387 aa).

A DNA-binding region (WRKY) is located at residues 197–264 (CEDPSINDGC…YEGNHDHPLP (68 aa)). The disordered stretch occupies residues 322–366 (RPNYPNQLPDDYPLSSSSFSLNFSSPDPPPPSSHDHTLNFSGLRT). Positions 329 to 346 (LPDDYPLSSSSFSLNFSS) are enriched in low complexity.

Its subcellular location is the nucleus. Functionally, transcription factor. Interacts specifically with the W box (5'-(T)TGAC[CT]-3'), a frequently occurring elicitor-responsive cis-acting element. The polypeptide is Probable WRKY transcription factor 36 (WRKY36) (Arabidopsis thaliana (Mouse-ear cress)).